Consider the following 147-residue polypeptide: uncharacterized protein (147 aa).

The protein to B.subtilis XkdM.

This is an uncharacterized protein from Bacillus subtilis (strain 168).